Reading from the N-terminus, the 335-residue chain is Calcium-binding protein TgpCaBP (335 aa).

Residues 30 to 50 form a helical membrane-spanning segment; it reads LPLCVFSLFLFSFAFSALSGA. EF-hand domains lie at 113-148, 153-188, 190-225, and 227-262; these read MHQHQVRMEFQAIDKDNDGKVSLSELEATYVDSLDQ, QHKKEVEQRFKTVDKDNDGLLDLSEIRILMDPGKDE, LMKIEIEEILNAQDKNGDRKITVTEFIETEGTGSLN, and VEKTELEKEFKSYDLNADGAIDVEELQQIIKDPHSH. Residues Asp126, Asp128, Asp130, Lys132, Glu137, Asp166, Asp168, Asp170, Glu177, Asp203, Asn205, Asp207, Lys209, Glu214, Asp240, Asn242, Asp244, and Glu251 each coordinate Ca(2+). Residues 332–335 carry the Prevents secretion from ER motif; the sequence is HDEL.

It is found in the endoplasmic reticulum membrane. The protein localises to the cytoplasm. The protein resides in the cytosol. Its function is as follows. Calcium-binding protein. Participates in the efflux of intracellular Ca(2+) and storage of Ca(2+) in the endoplasmic reticulum. Required for gliding, host cell invasion and egress. Required for microneme secretion. The sequence is that of Calcium-binding protein TgpCaBP from Toxoplasma gondii.